Here is an 88-residue protein sequence, read N- to C-terminus: Early E1B 9 kDa protein (88 aa).

A disordered region spans residues asparagine 23–proline 88. Residues arginine 34 to serine 44 show a composition bias toward low complexity.

The chain is Early E1B 9 kDa protein from Homo sapiens (Human).